The chain runs to 155 residues: Small ribosomal subunit protein uS7 (155 aa).

This sequence belongs to the universal ribosomal protein uS7 family. Part of the 30S ribosomal subunit. Contacts proteins S9 and S11.

In terms of biological role, one of the primary rRNA binding proteins, it binds directly to 16S rRNA where it nucleates assembly of the head domain of the 30S subunit. Is located at the subunit interface close to the decoding center, probably blocks exit of the E-site tRNA. The sequence is that of Small ribosomal subunit protein uS7 from Cytophaga hutchinsonii (strain ATCC 33406 / DSM 1761 / CIP 103989 / NBRC 15051 / NCIMB 9469 / D465).